The chain runs to 401 residues: GRIP domain-containing protein C119.12 (401 aa).

A coiled-coil region spans residues 7 to 296; the sequence is NETKLVENEN…TLLIGKLQHE (290 aa). Positions 315 to 366 constitute a GRIP domain; that stretch reads NNAEKIDKQLISNLFVSFLTLPRADTKRFEILQLISSVLDWNDTQREQTGLQ.

Its subcellular location is the golgi apparatus lumen. The chain is GRIP domain-containing protein C119.12 from Schizosaccharomyces pombe (strain 972 / ATCC 24843) (Fission yeast).